The primary structure comprises 119 residues: Methylglyoxal synthase (119 aa).

The 119-residue stretch at 1–119 (MKIALIAHDK…ESAKLIMADI (119 aa)) folds into the MGS-like domain. Residues His-8, Lys-12, 34–37 (TGTT), and 54–55 (SG) contribute to the substrate site. The active-site Proton donor/acceptor is Asp-60. Residue His-87 participates in substrate binding.

This sequence belongs to the methylglyoxal synthase family.

It catalyses the reaction dihydroxyacetone phosphate = methylglyoxal + phosphate. Catalyzes the formation of methylglyoxal from dihydroxyacetone phosphate. This is Methylglyoxal synthase from Clostridium perfringens (strain 13 / Type A).